Reading from the N-terminus, the 320-residue chain is tRNA U34 carboxymethyltransferase (320 aa).

Carboxy-S-adenosyl-L-methionine contacts are provided by residues K89, W103, K108, G128, 150–152 (DPT), 179–180 (IE), M194, Y198, and R313.

Belongs to the class I-like SAM-binding methyltransferase superfamily. CmoB family. In terms of assembly, homotetramer.

It catalyses the reaction carboxy-S-adenosyl-L-methionine + 5-hydroxyuridine(34) in tRNA = 5-carboxymethoxyuridine(34) in tRNA + S-adenosyl-L-homocysteine + H(+). In terms of biological role, catalyzes carboxymethyl transfer from carboxy-S-adenosyl-L-methionine (Cx-SAM) to 5-hydroxyuridine (ho5U) to form 5-carboxymethoxyuridine (cmo5U) at position 34 in tRNAs. The protein is tRNA U34 carboxymethyltransferase of Actinobacillus pleuropneumoniae serotype 3 (strain JL03).